Consider the following 403-residue polypeptide: S-adenosylmethionine synthase (403 aa).

Histidine 14 is an ATP binding site. Mg(2+) is bound at residue aspartate 16. Glutamate 42 provides a ligand contact to K(+). The L-methionine site is built by glutamate 55 and glutamine 99. Residues 99 to 109 are flexible loop; that stretch reads QSPEIAEGVDH. ATP is bound by residues 180–182, 250–251, aspartate 259, 265–266, alanine 282, and lysine 286; these read DAK, RF, and RK. Aspartate 259 lines the L-methionine pocket. An L-methionine-binding site is contributed by lysine 290.

The protein belongs to the AdoMet synthase family. As to quaternary structure, homotetramer; dimer of dimers. Requires Mg(2+) as cofactor. K(+) is required as a cofactor.

It localises to the cytoplasm. It catalyses the reaction L-methionine + ATP + H2O = S-adenosyl-L-methionine + phosphate + diphosphate. It functions in the pathway amino-acid biosynthesis; S-adenosyl-L-methionine biosynthesis; S-adenosyl-L-methionine from L-methionine: step 1/1. Its function is as follows. Catalyzes the formation of S-adenosylmethionine (AdoMet) from methionine and ATP. The overall synthetic reaction is composed of two sequential steps, AdoMet formation and the subsequent tripolyphosphate hydrolysis which occurs prior to release of AdoMet from the enzyme. This Deinococcus deserti (strain DSM 17065 / CIP 109153 / LMG 22923 / VCD115) protein is S-adenosylmethionine synthase.